A 466-amino-acid polypeptide reads, in one-letter code: 3-isopropylmalate dehydratase large subunit (466 aa).

[4Fe-4S] cluster-binding residues include Cys347, Cys407, and Cys410.

The protein belongs to the aconitase/IPM isomerase family. LeuC type 1 subfamily. In terms of assembly, heterodimer of LeuC and LeuD. It depends on [4Fe-4S] cluster as a cofactor.

It carries out the reaction (2R,3S)-3-isopropylmalate = (2S)-2-isopropylmalate. It participates in amino-acid biosynthesis; L-leucine biosynthesis; L-leucine from 3-methyl-2-oxobutanoate: step 2/4. Catalyzes the isomerization between 2-isopropylmalate and 3-isopropylmalate, via the formation of 2-isopropylmaleate. The protein is 3-isopropylmalate dehydratase large subunit of Shewanella halifaxensis (strain HAW-EB4).